We begin with the raw amino-acid sequence, 144 residues long: 3-hydroxyacyl-[acyl-carrier-protein] dehydratase FabZ (144 aa).

His-49 is a catalytic residue.

This sequence belongs to the thioester dehydratase family. FabZ subfamily.

The protein localises to the cytoplasm. The enzyme catalyses a (3R)-hydroxyacyl-[ACP] = a (2E)-enoyl-[ACP] + H2O. Its function is as follows. Involved in unsaturated fatty acids biosynthesis. Catalyzes the dehydration of short chain beta-hydroxyacyl-ACPs and long chain saturated and unsaturated beta-hydroxyacyl-ACPs. This is 3-hydroxyacyl-[acyl-carrier-protein] dehydratase FabZ from Alkaliphilus oremlandii (strain OhILAs) (Clostridium oremlandii (strain OhILAs)).